The chain runs to 550 residues: 4-coumarate--CoA ligase-like 8 (550 aa).

Positions 207, 208, 209, 210, 211, and 215 each coordinate ATP. Phe253 contacts (E)-4-coumaroyl-AMP. Arg274 contributes to the CoA binding site. The SBD1 stretch occupies residues 276-347 (DLGEMMAAVE…KKYPTVDVYQ (72 aa)). (E)-4-coumaroyl-AMP-binding residues include Gly325, Gln347, Gly348, and Thr352. Residues Gln347, Gly348, Thr352, Asp430, and Arg445 each contribute to the ATP site. Residues 348 to 412 (GYALTESNGA…LKGPSIAKGY (65 aa)) form an SBD2 region. (E)-4-coumaroyl-AMP is bound by residues Lys447 and Lys451. Lys453 and Gly454 together coordinate CoA. ATP is bound at residue Lys536. Positions 548–550 (SKI) match the Microbody targeting signal motif.

This sequence belongs to the ATP-dependent AMP-binding enzyme family. Requires Mg(2+) as cofactor.

The protein resides in the peroxisome. It carries out the reaction (E)-4-coumarate + ATP + CoA = (E)-4-coumaroyl-CoA + AMP + diphosphate. It catalyses the reaction (E)-4-coumarate + ATP + H(+) = (E)-4-coumaroyl-AMP + diphosphate. The catalysed reaction is (E)-4-coumaroyl-AMP + CoA = (E)-4-coumaroyl-CoA + AMP + H(+). Its function is as follows. Carboxylate--CoA ligase that may use 4-coumarate as substrate. Follows a two-step reaction mechanism, wherein the carboxylate substrate first undergoes adenylation by ATP, followed by a thioesterification in the presence of CoA to yield the final CoA thioester. The polypeptide is 4-coumarate--CoA ligase-like 8 (Arabidopsis thaliana (Mouse-ear cress)).